The primary structure comprises 160 residues: SsrA-binding protein (160 aa).

The protein belongs to the SmpB family.

The protein resides in the cytoplasm. In terms of biological role, required for rescue of stalled ribosomes mediated by trans-translation. Binds to transfer-messenger RNA (tmRNA), required for stable association of tmRNA with ribosomes. tmRNA and SmpB together mimic tRNA shape, replacing the anticodon stem-loop with SmpB. tmRNA is encoded by the ssrA gene; the 2 termini fold to resemble tRNA(Ala) and it encodes a 'tag peptide', a short internal open reading frame. During trans-translation Ala-aminoacylated tmRNA acts like a tRNA, entering the A-site of stalled ribosomes, displacing the stalled mRNA. The ribosome then switches to translate the ORF on the tmRNA; the nascent peptide is terminated with the 'tag peptide' encoded by the tmRNA and targeted for degradation. The ribosome is freed to recommence translation, which seems to be the essential function of trans-translation. In Photorhabdus laumondii subsp. laumondii (strain DSM 15139 / CIP 105565 / TT01) (Photorhabdus luminescens subsp. laumondii), this protein is SsrA-binding protein.